The sequence spans 109 residues: Large ribosomal subunit protein uL22 (109 aa).

Belongs to the universal ribosomal protein uL22 family. As to quaternary structure, part of the 50S ribosomal subunit.

In terms of biological role, this protein binds specifically to 23S rRNA; its binding is stimulated by other ribosomal proteins, e.g. L4, L17, and L20. It is important during the early stages of 50S assembly. It makes multiple contacts with different domains of the 23S rRNA in the assembled 50S subunit and ribosome. The globular domain of the protein is located near the polypeptide exit tunnel on the outside of the subunit, while an extended beta-hairpin is found that lines the wall of the exit tunnel in the center of the 70S ribosome. The polypeptide is Large ribosomal subunit protein uL22 (Aromatoleum aromaticum (strain DSM 19018 / LMG 30748 / EbN1) (Azoarcus sp. (strain EbN1))).